Reading from the N-terminus, the 411-residue chain is Phosphoserine phosphatase (411 aa).

One can recognise an ACT domain in the interval 10–88 (LITVTGVDQP…LDVSIERSDD (79 aa)). Asp187 serves as the catalytic Nucleophile. 2 residues coordinate Mg(2+): Asp187 and Asp189. The active-site Proton donor is the Asp189. Substrate contacts are provided by residues Glu196, Arg232, 275–276 (SG), and Lys320. Asp343 contacts Mg(2+). Asn346 contacts substrate.

It belongs to the HAD-like hydrolase superfamily. SerB family. In terms of assembly, homodimer. Mg(2+) serves as cofactor.

The catalysed reaction is O-phospho-L-serine + H2O = L-serine + phosphate. It catalyses the reaction O-phospho-D-serine + H2O = D-serine + phosphate. The protein operates within amino-acid biosynthesis; L-serine biosynthesis; L-serine from 3-phospho-D-glycerate: step 3/3. Catalyzes the dephosphorylation of phosphoserine (P-Ser). The sequence is that of Phosphoserine phosphatase (serB) from Mycobacterium avium (strain 104).